A 211-amino-acid chain; its full sequence is Large ribosomal subunit protein uL3 (211 aa).

Position 150 is an N5-methylglutamine (glutamine 150).

Belongs to the universal ribosomal protein uL3 family. Part of the 50S ribosomal subunit. Forms a cluster with proteins L14 and L19. Post-translationally, methylated by PrmB.

In terms of biological role, one of the primary rRNA binding proteins, it binds directly near the 3'-end of the 23S rRNA, where it nucleates assembly of the 50S subunit. This chain is Large ribosomal subunit protein uL3, found in Pseudomonas fluorescens (strain SBW25).